Reading from the N-terminus, the 727-residue chain is MEDSYKDRTSLMKGAKDIAKEVKKQTVKKVNQAVDRAQDEYTQRSYSRFQDEEDDDDYYPPGETYSGEVNDDEGSSEATEGHDEEDEIYEGEYQGIPSTNQGKDSIVSVGQPKGDEYKDRRELESERRADEEELAQQYELIIQECGHGRFQWALFFVLGMALMADGVEVFVVGFVLPSAETDLCIPNSGSGWLGSIVYLGMMVGAFFWGGLADKVGRKQSLLICMSVNGFFAFLSSFVQGYGFFLVCRLLSGFGIGGAIPTVFSYFAEVLAREKRGEHLSWLCMFWMIGGIYASAMAWAIIPHYGWSFSMGSAYQFHSWRVFVIVCALPCVSSVVALTFMPESPRFLLEVGKHDEAWMILKLIHDTNMRARGQPEKVFTVNKIKTPKQIDELIEIESDTGTWYRRCFVRIRTELYGIWLTFMRCFNYPVRENTIKLTIVWFTLSFGYYGLSVWFPDVIKHLQSDEYALLTRNVQKDKYANFSINFTMENQIHTGMEYENGRFLGVKFKSVTFKDSVFKSCTFDDVTSVNTYFKNCTFIDTLFDNTDFEPYKFIDSEFQNCSFLHNKTGCQITFDDDYSAYWIYFVNFLGTLAVLPGNIVSALLMDRIGRLTMLGGSMVLSGISCFFLWFGTSESMMIGMLCLYNGLTISAWNSLDVVTVELYPTDRRATGFGFLNALCKAAAVLGNLIFGSLVSITKAIPILLASTVLVCGGLVGLRLPDTRTQVLM.

Positions 1-57 are interaction with SYT1; sequence MEDSYKDRTSLMKGAKDIAKEVKKQTVKKVNQAVDRAQDEYTQRSYSRFQDEEDDDD. The Cytoplasmic portion of the chain corresponds to 1–154; it reads MEDSYKDRTS…CGHGRFQWAL (154 aa). Positions 22 to 128 are disordered; the sequence is VKKQTVKKVN…DRRELESERR (107 aa). S75 and S76 each carry phosphoserine. The residue at position 79 (T79) is a Phosphothreonine. Basic and acidic residues predominate over residues 113-128; it reads KGDEYKDRRELESERR. The helical transmembrane segment at 155 to 175 threads the bilayer; the sequence is FFVLGMALMADGVEVFVVGFV. The Extracellular portion of the chain corresponds to 176 to 191; the sequence is LPSAETDLCIPNSGSG. The helical transmembrane segment at 192 to 212 threads the bilayer; the sequence is WLGSIVYLGMMVGAFFWGGLA. At 213–226 the chain is on the cytoplasmic side; it reads DKVGRKQSLLICMS. The chain crosses the membrane as a helical span at residues 227-247; it reads VNGFFAFLSSFVQGYGFFLVC. R248 is a topological domain (extracellular). Residues 249-269 traverse the membrane as a helical segment; sequence LLSGFGIGGAIPTVFSYFAEV. Topologically, residues 270–280 are cytoplasmic; the sequence is LAREKRGEHLS. A helical membrane pass occupies residues 281 to 301; that stretch reads WLCMFWMIGGIYASAMAWAII. Over 302–320 the chain is Extracellular; sequence PHYGWSFSMGSAYQFHSWR. Residues 321-341 form a helical membrane-spanning segment; sequence VFVIVCALPCVSSVVALTFMP. At 342–437 the chain is on the cytoplasmic side; the sequence is ESPRFLLEVG…PVRENTIKLT (96 aa). A helical membrane pass occupies residues 438–458; sequence IVWFTLSFGYYGLSVWFPDVI. The Extracellular segment spans residues 459–578; the sequence is KHLQSDEYAL…CQITFDDDYS (120 aa). Y466 carries the phosphotyrosine modification. 5 N-linked (GlcNAc...) asparagine glycosylation sites follow: N480, N484, N534, N559, and N565. Residues 579–599 form a helical membrane-spanning segment; it reads AYWIYFVNFLGTLAVLPGNIV. The Cytoplasmic portion of the chain corresponds to 600–609; sequence SALLMDRIGR. The helical transmembrane segment at 610 to 630 threads the bilayer; that stretch reads LTMLGGSMVLSGISCFFLWFG. Over 631-636 the chain is Extracellular; sequence TSESMM. A helical transmembrane segment spans residues 637–657; that stretch reads IGMLCLYNGLTISAWNSLDVV. Topologically, residues 658–670 are cytoplasmic; sequence TVELYPTDRRATG. Residues 671–693 form a helical membrane-spanning segment; sequence FGFLNALCKAAAVLGNLIFGSLV. The Extracellular segment spans residues 694-697; sequence SITK. A helical membrane pass occupies residues 698 to 716; sequence AIPILLASTVLVCGGLVGL. Over 717–727 the chain is Cytoplasmic; sequence RLPDTRTQVLM.

This sequence belongs to the major facilitator superfamily. Interacts with SYT1 in a calcium-dependent manner. In terms of assembly, (Microbial infection) Interacts with C.botulinum neurotoxin type A (BoNT/A, botA). As to quaternary structure, (Microbial infection) Interacts with C.botulinum neurotoxin type D (BoNT/D, botD). N-glycosylated. As to expression, expressed in specific subsets of conventional synapses in the retina (at protein level). Expressed in diaphragm motor nerve terminals (at protein level). Expressed in a subset of hippocampus neurons (at protein level).

It localises to the cytoplasmic vesicle. The protein localises to the secretory vesicle. Its subcellular location is the synaptic vesicle membrane. In terms of biological role, plays a role in the control of regulated secretion in neural and endocrine cells, enhancing selectively low-frequency neurotransmission. Positively regulates vesicle fusion by maintaining the readily releasable pool of secretory vesicles. Its function is as follows. (Microbial infection) Receptor for C.botulinum neurotoxin type A (BoNT/A, botA); the toxin binds Sv2c via extracellular loop 4. (Microbial infection) Possible receptor for C.botulinum neurotoxin type D (BoNT/D, botD). This chain is Synaptic vesicle glycoprotein 2C (Sv2c), found in Mus musculus (Mouse).